The sequence spans 198 residues: MKYPDFTLENKLSGVIAGVDEVGRGPLAGPVISAAVVFIDRNTIIDGINDSKKLTPQCRQVLYEKIISVAKFGIGMASVEEINSYNILQATKLSMKRALIDLDLELDYVLVDGNQPPEVKWQVKSIVNGDNLSTSIAAASIVAKVTRDRLMQELHNKHPEYNWYKNKGYGTKEHLNAIGLYGITEHHRRNFAPISRAL.

The RNase H type-2 domain maps to 14–198 (GVIAGVDEVG…RNFAPISRAL (185 aa)). A divalent metal cation contacts are provided by aspartate 20, glutamate 21, and aspartate 112.

It belongs to the RNase HII family. Requires Mn(2+) as cofactor. The cofactor is Mg(2+).

Its subcellular location is the cytoplasm. The enzyme catalyses Endonucleolytic cleavage to 5'-phosphomonoester.. Its function is as follows. Endonuclease that specifically degrades the RNA of RNA-DNA hybrids. The polypeptide is Ribonuclease HII (Wolbachia sp. subsp. Drosophila simulans (strain wRi)).